Here is a 255-residue protein sequence, read N- to C-terminus: Type III pantothenate kinase (255 aa).

ATP is bound at residue 6–13 (DIGNSNIV). Residues Tyr100 and 107-110 (GSDR) each bind substrate. Residue Asp109 is the Proton acceptor of the active site. K(+) is bound at residue Asp129. Thr132 contacts ATP. Residue Thr184 participates in substrate binding.

It belongs to the type III pantothenate kinase family. As to quaternary structure, homodimer. It depends on NH4(+) as a cofactor. Requires K(+) as cofactor.

It localises to the cytoplasm. The enzyme catalyses (R)-pantothenate + ATP = (R)-4'-phosphopantothenate + ADP + H(+). It functions in the pathway cofactor biosynthesis; coenzyme A biosynthesis; CoA from (R)-pantothenate: step 1/5. Its function is as follows. Catalyzes the phosphorylation of pantothenate (Pan), the first step in CoA biosynthesis. This Brevibacillus brevis (strain 47 / JCM 6285 / NBRC 100599) protein is Type III pantothenate kinase.